Reading from the N-terminus, the 1499-residue chain is Streptococcal surface protein B (1499 aa).

An N-terminal signal peptide occupies residues 1-37; sequence MQKREVFGFRKSKVAKTLCGAVLGAALIAIADQQVLA. The segment at 50–84 is disordered; sequence AVTTTGNPATNLPEAQGEATEAASQSQAQAGSKDG. Ag I/II A repeat units lie at residues 145–219, 220–301, 302–383, and 384–465; these read KKTT…QKAN, EDSQ…KKAK, EDND…KQAN, and ATNE…KKDF. Disordered stretches follow at residues 689–709, 763–907, and 1409–1472; these read YADS…SEWD, TAPT…TPPV, and RTTT…TGTN. Over residues 694-705 the composition is skewed to basic and acidic residues; it reads NAEKSRGARWDT. A compositionally biased stretch (pro residues) spans 789 to 799; the sequence is PTPPVKTPDQP. Residues 800 to 815 show a composition bias toward basic and acidic residues; that stretch reads EPSKPEEPTYETEKPL. The span at 828–838 shows a compositional bias: pro residues; sequence PTPPVKIPDQP. Residues 839-854 are compositionally biased toward basic and acidic residues; it reads EPSKPEEPTYETEKPL. 2 stretches are compositionally biased toward pro residues: residues 867–877 and 888–907; these read PTPPVKTPDQP and DPLP…TPPV. Over residues 1428–1450 the composition is skewed to basic and acidic residues; that stretch reads KPKDPDKPETPKEPKVPSPKVED. The short motif at 1466–1470 is the LPXTG sorting signal element; sequence LPKTG. Thr-1469 is subject to Pentaglycyl murein peptidoglycan amidated threonine. Positions 1470 to 1499 are cleaved as a propeptide — removed by sortase; that stretch reads GTNDATYMPYLGLAALVGFLGLGLAKRKED.

It belongs to the antigen I/II family.

Its subcellular location is the secreted. The protein resides in the cell wall. It is found in the cell surface. In terms of biological role, adhesin that mediates binding of bacteria to a variety of host cells. Plays a role in the bacterial invasion of dentinal tubules. A host immunostimulatory component, it modulates the innate immunity response. Plays a protective role against some antibiotics and cationic antimicrobial peptides (histatin-5, HTN3, but not beta-defensin 4A, DEFB4A). This is Streptococcal surface protein B from Streptococcus gordonii (strain Challis / ATCC 35105 / BCRC 15272 / CH1 / DL1 / V288).